A 110-amino-acid polypeptide reads, in one-letter code: ATP-dependent Clp protease adapter protein ClpS 2 (110 aa).

The tract at residues 1-24 (MSNDENRSGSPTGPNTSVITKVKP) is disordered. Positions 8–19 (SGSPTGPNTSVI) are enriched in polar residues.

It belongs to the ClpS family. As to quaternary structure, binds to the N-terminal domain of the chaperone ClpA.

Its function is as follows. Involved in the modulation of the specificity of the ClpAP-mediated ATP-dependent protein degradation. The sequence is that of ATP-dependent Clp protease adapter protein ClpS 2 from Bradyrhizobium diazoefficiens (strain JCM 10833 / BCRC 13528 / IAM 13628 / NBRC 14792 / USDA 110).